We begin with the raw amino-acid sequence, 209 residues long: Ribonuclease HII (209 aa).

Positions 18 to 209 (SLVAGVDEVG…FKPVKALLER (192 aa)) constitute an RNase H type-2 domain. A divalent metal cation-binding residues include Asp-24, Glu-25, and Asp-116.

Belongs to the RNase HII family. The cofactor is Mn(2+). Requires Mg(2+) as cofactor.

Its subcellular location is the cytoplasm. It catalyses the reaction Endonucleolytic cleavage to 5'-phosphomonoester.. Its function is as follows. Endonuclease that specifically degrades the RNA of RNA-DNA hybrids. In Shewanella oneidensis (strain ATCC 700550 / JCM 31522 / CIP 106686 / LMG 19005 / NCIMB 14063 / MR-1), this protein is Ribonuclease HII.